A 392-amino-acid chain; its full sequence is 23S rRNA (uracil(747)-C(5))-methyltransferase RlmC (392 aa).

[4Fe-4S] cluster contacts are provided by Cys4, Cys12, Cys15, and Cys93. Residues Gln218, Phe247, Glu275, and Asn321 each coordinate S-adenosyl-L-methionine. Cys348 (nucleophile) is an active-site residue.

This sequence belongs to the class I-like SAM-binding methyltransferase superfamily. RNA M5U methyltransferase family. RlmC subfamily.

It catalyses the reaction uridine(747) in 23S rRNA + S-adenosyl-L-methionine = 5-methyluridine(747) in 23S rRNA + S-adenosyl-L-homocysteine + H(+). Functionally, catalyzes the formation of 5-methyl-uridine at position 747 (m5U747) in 23S rRNA. This chain is 23S rRNA (uracil(747)-C(5))-methyltransferase RlmC, found in Haemophilus influenzae (strain 86-028NP).